Here is a 126-residue protein sequence, read N- to C-terminus: UPF0332 protein glr0978 (126 aa).

The protein belongs to the UPF0332 family.

The protein is UPF0332 protein glr0978 of Gloeobacter violaceus (strain ATCC 29082 / PCC 7421).